A 68-amino-acid polypeptide reads, in one-letter code: Small ribosomal subunit protein bS18c (68 aa).

It belongs to the bacterial ribosomal protein bS18 family. In terms of assembly, part of the 30S ribosomal subunit.

Its subcellular location is the plastid. The protein resides in the chloroplast. The sequence is that of Small ribosomal subunit protein bS18c (rps18) from Cyanidium caldarium (Red alga).